A 93-amino-acid chain; its full sequence is MANNKSAKKRILITKRNNLQNRFYKSSVRTLTKRFLSDLETYKISQSNTDKDKLQNGLSSIYSLIDKGYKKNVYHKNTAARKKSKLAALLKAA.

It belongs to the bacterial ribosomal protein bS20 family.

It is found in the plastid. It localises to the chloroplast. In terms of biological role, binds directly to 16S ribosomal RNA. This is Small ribosomal subunit protein bS20c from Thalassiosira pseudonana (Marine diatom).